The sequence spans 375 residues: 4,4'-diaponeurosporenoate glycosyltransferase (375 aa).

4 helical membrane passes run 3–23 (WLSR…ALIF), 164–184 (FYEG…NVFS), 277–297 (IMTA…GLCL), and 330–350 (FSNL…KIFI).

Belongs to the glycosyltransferase 2 family. CrtQ subfamily.

It localises to the cell membrane. The protein operates within carotenoid biosynthesis; staphyloxanthin biosynthesis; staphyloxanthin from farnesyl diphosphate: step 4/5. In terms of biological role, catalyzes the glycosylation of 4,4'-diaponeurosporenoate, i.e. the esterification of glucose at the C1'' position with the carboxyl group of 4,4'-diaponeurosporenic acid, to form glycosyl-4,4'-diaponeurosporenoate. This is a step in the biosynthesis of staphyloxanthin, an orange pigment present in most staphylococci strains. The protein is 4,4'-diaponeurosporenoate glycosyltransferase (crtQ) of Staphylococcus aureus (strain Mu50 / ATCC 700699).